A 564-amino-acid chain; its full sequence is Hsp70-Hsp90 organising protein (564 aa).

TPR repeat units lie at residues 7–40 (AQRLKELGNKCFQEGKYEEAVKYFSDAITNDPLD), 42–74 (VLYSNLSGAFASLGRFYEALESANKCISIKKDW), and 76–108 (KGYIRKGCAEHGLRQLSNAEKTYLEGLKIDPNN). Residues 197–239 (EGNDAEERQRQQREEEERRKKKEEEERKKKEEEEMKKQNRTPE) are a coiled coil. Positions 199-247 (NDAEERQRQQREEEERRKKKEEEERKKKEEEEMKKQNRTPEQIQGDEHK) are disordered. Over residues 201–233 (AEERQRQQREEEERRKKKEEEERKKKEEEEMKK) the composition is skewed to basic and acidic residues. TPR repeat units follow at residues 243–276 (GDEHKLKGNEFYKQKKFDEALKEYEEAIQINPND), 278–310 (MYHYNKAAVHIEMKNYDKAVETCLYAIENRYNF), 318–351 (AKLYNRLAISYINMKKYDLAIEAYRKSLVEDNNR), 378–411 (AEEHKNKGNEYFKNNDFPNAKKEYDEAIRRNPND), 413–445 (KLYSNRAAALTKLIEYPSALEDVMKAIELDPTF), and 446–479 (VKAYSRKGNLHFFMKDYYKALQAYNKGLELDPNN). An STI1 domain is found at 513 to 552 (DPEIQQIISDPQFQIILQKLNENPNSISEYIKDPKIFNGL).

As to quaternary structure, monomer. Homodimer. Forms a complex composed of HOP and chaperones HSP70 and HSP90; the interaction is stronger in the absence of ATP. Interacts (via TPR 1, 2, 3, 7, 8 and 9 repeats) with HSP70 (via C-terminus); the interaction is direct and is stronger in the absence of ATP. Interacts (via TPR 4, 5 and 6 repeats) with HSP90 (via C-terminus); the interaction is direct.

It is found in the cytoplasm. Functionally, acts as a co-chaperone and mediates the association of the chaperones HSP70 and HSP90 probably facilitating substrate transfer from HSP70 to HSP90. Stimulates HSP70 ATPase activity and, in contrast, inhibits HSP90 ATPase activity. The protein is Hsp70-Hsp90 organising protein of Plasmodium falciparum (isolate 3D7).